We begin with the raw amino-acid sequence, 166 residues long: Putative protein PTGES3L (166 aa).

The region spanning arginine 46–aspartate 154 is the CS domain. Residues serine 142–asparagine 166 are disordered. Acidic residues predominate over residues aspartate 151–asparagine 166.

It belongs to the p23/wos2 family.

The chain is Putative protein PTGES3L from Homo sapiens (Human).